A 100-amino-acid polypeptide reads, in one-letter code: Large ribosomal subunit protein uL23 (100 aa).

This sequence belongs to the universal ribosomal protein uL23 family. In terms of assembly, part of the 50S ribosomal subunit. Contacts protein L29, and trigger factor when it is bound to the ribosome.

One of the early assembly proteins it binds 23S rRNA. One of the proteins that surrounds the polypeptide exit tunnel on the outside of the ribosome. Forms the main docking site for trigger factor binding to the ribosome. This chain is Large ribosomal subunit protein uL23, found in Xylella fastidiosa (strain M23).